A 485-amino-acid chain; its full sequence is Glutamate--tRNA ligase 1 (485 aa).

Residues proline 10–asparagine 20 carry the 'HIGH' region motif. Residues lysine 252–arginine 256 carry the 'KMSKS' region motif. An ATP-binding site is contributed by lysine 255.

The protein belongs to the class-I aminoacyl-tRNA synthetase family. Glutamate--tRNA ligase type 1 subfamily. As to quaternary structure, monomer.

The protein localises to the cytoplasm. The catalysed reaction is tRNA(Glu) + L-glutamate + ATP = L-glutamyl-tRNA(Glu) + AMP + diphosphate. Its function is as follows. Catalyzes the attachment of glutamate to tRNA(Glu) in a two-step reaction: glutamate is first activated by ATP to form Glu-AMP and then transferred to the acceptor end of tRNA(Glu). The chain is Glutamate--tRNA ligase 1 from Thermoanaerobacter sp. (strain X514).